A 175-amino-acid polypeptide reads, in one-letter code: 3-hydroxydecanoyl-[acyl-carrier-protein] dehydratase (175 aa).

His-71 is an active-site residue.

This sequence belongs to the thioester dehydratase family. FabA subfamily. In terms of assembly, homodimer.

It is found in the cytoplasm. The catalysed reaction is a (3R)-hydroxyacyl-[ACP] = a (2E)-enoyl-[ACP] + H2O. It catalyses the reaction (3R)-hydroxydecanoyl-[ACP] = (2E)-decenoyl-[ACP] + H2O. The enzyme catalyses (2E)-decenoyl-[ACP] = (3Z)-decenoyl-[ACP]. It functions in the pathway lipid metabolism; fatty acid biosynthesis. Functionally, necessary for the introduction of cis unsaturation into fatty acids. Catalyzes the dehydration of (3R)-3-hydroxydecanoyl-ACP to E-(2)-decenoyl-ACP and then its isomerization to Z-(3)-decenoyl-ACP. Can catalyze the dehydratase reaction for beta-hydroxyacyl-ACPs with saturated chain lengths up to 16:0, being most active on intermediate chain length. The polypeptide is 3-hydroxydecanoyl-[acyl-carrier-protein] dehydratase (Rhodopseudomonas palustris (strain BisB5)).